A 376-amino-acid chain; its full sequence is MTFLMLAVSLAIPLLGAMMLLESPIDPQSFSFKEPPFMFGVLQPNTKLRQAERLFENQLNGPESIVNIGDVLFTGTADGRVVKLENGEIETIARFGSGPCKTRDDEPTCGRPLGIRVGPNGTLFVVDAYKGLFEVNPQKRSVKLLLSSETPIEGKKMSFVNDLTITRDGRKIYFTDSSSKWQRRDYLLLVMEGTDDGRLLEYDTVTKEVKVLLDQLQFPNGVQLSPEEDFVLVAETAMARIRRVYVSGLMKGGADMFVENMPGFPDNIRPSSSGGYWVAAATIRANPGFSMLDFLSDKPFIKRMIFKLFSQETVMKFVPRYSLVLEVSDSGAFRRSLHDPDGQVVTYVSEAHEHDGYLYLGSFRSPFICRLSLQSI.

The chain crosses the membrane as a helical span at residues 1 to 17; that stretch reads MTFLMLAVSLAIPLLGA. An N-linked (GlcNAc...) asparagine glycan is attached at N120.

It belongs to the strictosidine synthase family.

Its subcellular location is the membrane. Functionally, exhibits strong arylesterase activity with beta-naphthyl acetate and phenyl acetate. May play a role in adipocyte differentiation. This Rattus norvegicus (Rat) protein is Adipocyte plasma membrane-associated protein (Apmap).